The following is a 389-amino-acid chain: Putative F-box protein At1g47790 (389 aa).

In terms of domain architecture, F-box spans 19–65; the sequence is SKPTSSFPLDLASEILLRLPVKSVVRFRCVSKLWSSIITDPYFIKTY.

The sequence is that of Putative F-box protein At1g47790 from Arabidopsis thaliana (Mouse-ear cress).